The chain runs to 79 residues: Large ribosomal subunit protein uL29 (79 aa).

It belongs to the universal ribosomal protein uL29 family.

The chain is Large ribosomal subunit protein uL29 from Nocardia farcinica (strain IFM 10152).